The chain runs to 500 residues: MNLIYTIILTIIILVLIISIKDLFFEDKIKKINKSIPSPPTIPIFGNLLQINSKDVATCFNDFYKQYGKVYRLRLGSVETVVLTGGDIIDECFNKKYRDFLKARYVKFSRYLGKDTNILHSNGDYHFLLKGVLSSQVTVRKLNNGRLEFNKYILQMFNNLNNNDEGSTMFLANDVPSQIKKLILKVVLNFTLGIEENDDINLSLFQNGSNIFKAAGLFIYSDYLPFLFPLDIKSMAKSNMISSYVFVRDYLAKKLEEVKKKEYIINGDDDGGVDTSQTPLIESYYKLYLQGLIGYDSILLSIVDIIIASVDTTSNSISFIIARLTNHQEIQSKIYEEIMSNDINNNSNNISFSDHSKYPYIISIMNETYRYYASVPLPEPNMTTEDIEVDGYKIAKGTQIYKNIRGTLISKEFWGEDALEFKPERFKTQTLNQKGLLHFGAGPRGCPGARFTECFFFTLMVLLFKNYKLQNPNDNPIDDRGDVGLSMQCKPYDALFIKRN.

The chain crosses the membrane as a helical span at residues 4-24 (IYTIILTIIILVLIISIKDLF). A heme-binding site is contributed by Cys446.

The protein belongs to the cytochrome P450 family. Heme is required as a cofactor.

It localises to the membrane. The chain is Probable cytochrome P450 514A2 (cyp514A2) from Dictyostelium discoideum (Social amoeba).